The primary structure comprises 167 residues: UPF0598 protein CG30010 (167 aa).

This sequence belongs to the UPF0598 family.

In Drosophila melanogaster (Fruit fly), this protein is UPF0598 protein CG30010.